Consider the following 244-residue polypeptide: Probable 2-phosphosulfolactate phosphatase (244 aa).

The protein belongs to the ComB family. Mg(2+) is required as a cofactor.

It carries out the reaction (2R)-O-phospho-3-sulfolactate + H2O = (2R)-3-sulfolactate + phosphate. This is Probable 2-phosphosulfolactate phosphatase from Cyanothece sp. (strain PCC 7425 / ATCC 29141).